Here is an 832-residue protein sequence, read N- to C-terminus: SID1 transmembrane family member 2 (832 aa).

Residues 1–15 form the signal peptide; it reads MIAWRLPLCVLLVAA. Residues 16-293 lie on the Extracellular side of the membrane; that stretch reads VESHLGALGP…VSQAVTSEAY (278 aa). 6 N-linked (GlcNAc...) asparagine glycosylation sites follow: N27, N54, N60, N123, N141, and N165. Residues 294 to 314 traverse the membrane as a helical segment; the sequence is VGGMLFCLGIFLSFYLLTVLL. Over 315–447 the chain is Cytoplasmic; sequence ACWENWRQRK…DKRVLRKKYQ (133 aa). 3 positions are modified to phosphoserine: S401, S403, and S404. The helical transmembrane segment at 448-468 threads the bilayer; that stretch reads IYFWNIATIAVFYALPVVQLV. At 469-499 the chain is on the extracellular side; that stretch reads ITYQTVVNVTGNQDICYYNFLCAHPLGNLSA. N-linked (GlcNAc...) asparagine glycosylation is found at N476 and N496. A helical membrane pass occupies residues 500 to 520; sequence FNNILSNLGYILLGLLFLLII. Topologically, residues 521 to 546 are cytoplasmic; sequence LQREINHNRALLRNDLYALECGIPKH. A helical membrane pass occupies residues 547–567; sequence FGLFYAMGTALMMEGLLSACY. Topologically, residues 568-605 are extracellular; that stretch reads HVCPNYTNFQFDTSFMYMIAGLCMLKLYQKRHPDINAS. Residues N572 and N603 are each glycosylated (N-linked (GlcNAc...) asparagine). Residues 606–626 traverse the membrane as a helical segment; sequence AYSAYACLAIVIFFSVLGVVF. Residues 627–631 are Cytoplasmic-facing; the sequence is GKGNT. Residues 632-652 form a helical membrane-spanning segment; it reads AFWIVFSVIHIISTLLLSTQL. Over 653-688 the chain is Extracellular; it reads YYMGRWKLDSGIFRRILHVLYTDCIRQCSGPLYTDR. A helical transmembrane segment spans residues 689 to 709; that stretch reads MVLLVMGNIINWSLAAYGLIM. At 710–715 the chain is on the cytoplasmic side; sequence RPNDFA. A helical membrane pass occupies residues 716–736; the sequence is SYLLAIGICNLLLYFAFYIIM. At 737 to 746 the chain is on the extracellular side; it reads KLRSGERIKL. A helical membrane pass occupies residues 747 to 767; that stretch reads IPLLCIVCTSVVWGFALFFFF. Topologically, residues 768 to 796 are cytoplasmic; it reads QGLSTWQKTPAESREHNRDCILLDFFDDH. Residues 797 to 817 form a helical membrane-spanning segment; that stretch reads DIWHFLSSIAMFGSFLVLLTL. Residues 818–832 are Extracellular-facing; that stretch reads DDDLDTVQRDKIYVF.

Belongs to the SID1 family. As to quaternary structure, interacts with adapter protein complex 1 (AP-1) and AP-2, but not AP-3 and AP-4. Interacts with LAMP2. Glycosylated. As to expression, highly expressed in the liver, brain, kidney and intestine (at protein level).

It is found in the lysosome membrane. The protein resides in the cell membrane. Functionally, mediates the translocation of RNA and DNA across the lysosomal membrane during RNA and DNA autophagy (RDA), a process in which RNA or DNA is directly imported into lysosomes in an ATP-dependent manner, and degraded. Involved in the uptake of single-stranded oligonucleotides by living cells, a process called gymnosis. In vitro, mediates the uptake of linear DNA more efficiently than that of circular DNA, but exhibits similar uptake efficacy toward RNA and DNA. Binds long double-stranded RNA (dsRNA) (500 - 700 base pairs), but not dsRNA shorter than 100 bp. The chain is SID1 transmembrane family member 2 (Sidt2) from Rattus norvegicus (Rat).